A 341-amino-acid chain; its full sequence is MKALSKLKAEPGIWMTDAPKPEVGHNDLLIKIRKTAICGTDVHIYKWDEWAQKTIPTPMVVGHEYVGEVVDMGQEVRGFKVGDRVSGEGHITCGHCRNCRAGRVHLCRNTTGVGVNREGAFAEYLVIPAFNAFKIPDNISDELASIFDPFGNAVHTALSFDLVGEDVLITGAGPIGIMAAAVAKHVGARHVVISDVNEYRLELARKMGATRAVNVANEKLEDVIKELGMTEGFDIGLEMSGVPSAFNSMLNNMNHGGKVAMLGIPPSDMAVDWNQVIFKGLVIKGIYGREMFETWYKMASLIQSGLDLNPIITHQYSIDDFQAGFDMMISGQSGKVILNWD.

Residue Cys-38 coordinates Zn(2+). Active-site charge relay system residues include Thr-40 and His-43. Positions 63, 64, 93, 96, 99, and 107 each coordinate Zn(2+). Residues Ile-175, Asp-195, Arg-200, 262–264 (LGI), and 286–287 (IY) contribute to the NAD(+) site.

Belongs to the zinc-containing alcohol dehydrogenase family. In terms of assembly, homotetramer. Requires Zn(2+) as cofactor.

The protein localises to the cytoplasm. The enzyme catalyses L-threonine + NAD(+) = (2S)-2-amino-3-oxobutanoate + NADH + H(+). It participates in amino-acid degradation; L-threonine degradation via oxydo-reductase pathway; glycine from L-threonine: step 1/2. Functionally, catalyzes the NAD(+)-dependent oxidation of L-threonine to 2-amino-3-ketobutyrate. This is L-threonine 3-dehydrogenase from Pseudoalteromonas translucida (strain TAC 125).